The primary structure comprises 957 residues: Iron-responsive element-binding protein 2 (957 aa).

[4Fe-4S] cluster contacts are provided by cysteine 506, cysteine 572, and cysteine 575.

This sequence belongs to the aconitase/IPM isomerase family. Requires [4Fe-4S] cluster as cofactor. Ubiquitinated and degraded by the proteasome in presence of high level of iron and oxygen.

The protein localises to the cytoplasm. RNA-binding protein that binds to iron-responsive elements (IRES), which are stem-loop structures found in the 5'-UTR of ferritin, and delta aminolevulinic acid synthase mRNAs, and in the 3'-UTR of transferrin receptor mRNA. Binding to the IRE element in ferritin results in the repression of its mRNA translation. Binding of the protein to the transferrin receptor mRNA inhibits the degradation of this otherwise rapidly degraded mRNA. The protein is Iron-responsive element-binding protein 2 (ireb2) of Xenopus tropicalis (Western clawed frog).